The following is a 190-amino-acid chain: uncharacterized protein (190 aa).

The chain crosses the membrane as a helical span at residues 1 to 21; it reads MLVMSITFSFVAVALLVYFYV. The segment covering 103-114 has biased composition (basic and acidic residues); sequence REEVCARPEHRS. Positions 103–130 are disordered; that stretch reads REEVCARPEHRSAPSRAGSSAAKPTPTK.

It to B.burgdorferi BB0265.

The protein localises to the membrane. This is an uncharacterized protein from Treponema pallidum (strain Nichols).